An 836-amino-acid polypeptide reads, in one-letter code: Phenylalanine--tRNA ligase beta subunit (836 aa).

Residues 44 to 160 (PETTGPLVIG…EIAEPGTDAR (117 aa)) form the tRNA-binding domain. Residues 420-495 (PSMPQIRMKT…RLEGLEDIPT (76 aa)) form the B5 domain. 4 residues coordinate Mg(2+): Asp473, Asp479, Glu482, and Glu483. The 94-residue stretch at 742–835 (SAFPVLHQDL…AAELFGATMR (94 aa)) folds into the FDX-ACB domain.

The protein belongs to the phenylalanyl-tRNA synthetase beta subunit family. Type 1 subfamily. Tetramer of two alpha and two beta subunits. The cofactor is Mg(2+).

It localises to the cytoplasm. It carries out the reaction tRNA(Phe) + L-phenylalanine + ATP = L-phenylalanyl-tRNA(Phe) + AMP + diphosphate + H(+). This is Phenylalanine--tRNA ligase beta subunit from Corynebacterium diphtheriae (strain ATCC 700971 / NCTC 13129 / Biotype gravis).